The sequence spans 441 residues: MTVLDDHFPQGDDETVVPTSSSIPILSQMRQIVIKKRLLISFLLTFFILALSSASILTYFFFRSKSITNFKSLAIEHIESHYPSMDPSKRAGFVEEIVKIRQTGKITSDAESELDMLIEFDAFVEKYKKVHRSFDQRVQRFLTFRKNYHIVKTHKPTEPYSLDLNKFSDLSDEEFKALYPVITPPKTYTSLSKHLEFKKMSHKNPIYISKLKKAKGIEEIKDLSLITGENLNWARTDAVSPIKDQGDHCGSCWAFSSIASVESLYRLYKNKSYFLSEQELVNCDKSSMGCAGGLPITALEYIHSKGVSFESEVPYTGIVSPCKPSIKNKVFIDSISILKGNDVVNKSLVISPTVVGIAVTKELKLYSGGIFTGKCGGELNHAVLLVGEGVDHETGMRYWIIKNSWGEDWGENGFLRLQRTKKGLDKCGILTFGLNPILYSS.

A disulfide bridge connects residues C249 and C290. The active site involves C252. N-linked (GlcNAc...) asparagine glycosylation is found at N270 and N345. Catalysis depends on residues H381 and N403.

It belongs to the peptidase C1 family.

In Theileria annulata, this protein is Cysteine proteinase (TACP).